The sequence spans 209 residues: MSISKAIAADLLEIKAVSLSPSQPFTWASGIKSPIYTDNRVTLAYPEVRSQIEGAFAELIKAEFPEVEVIAGTATAGIPHGAIIADYLKLPFAYIRSKPKDHGAGNQVEGRVAKGQKMVVVEDLISTGGSVLEAVAAAEREGADVLGVVAIFTYELEKANSKFAESGVKLATLTNYSELIEIAKETGYVTKEELELLKKFKENQETWQA.

Residues Arg-96, Lys-100, His-102, and 122-130 each bind 5-phospho-alpha-D-ribose 1-diphosphate; that span reads EDLISTGGS. Ser-126 contributes to the orotate binding site.

The protein belongs to the purine/pyrimidine phosphoribosyltransferase family. PyrE subfamily. Homodimer. The cofactor is Mg(2+).

It catalyses the reaction orotidine 5'-phosphate + diphosphate = orotate + 5-phospho-alpha-D-ribose 1-diphosphate. Its pathway is pyrimidine metabolism; UMP biosynthesis via de novo pathway; UMP from orotate: step 1/2. Its function is as follows. Catalyzes the transfer of a ribosyl phosphate group from 5-phosphoribose 1-diphosphate to orotate, leading to the formation of orotidine monophosphate (OMP). The polypeptide is Orotate phosphoribosyltransferase (Lactococcus lactis subsp. cremoris (strain SK11)).